Consider the following 607-residue polypeptide: UvrABC system protein C (607 aa).

The GIY-YIG domain occupies 16–94; sequence GRPGVYRMFD…IKEWRPPYNI (79 aa). Residues 203 to 238 form the UVR domain; sequence HALTNELSTAMEEAAINLEFERAAELRDQIALLRRV.

It belongs to the UvrC family. Interacts with UvrB in an incision complex.

It is found in the cytoplasm. Its function is as follows. The UvrABC repair system catalyzes the recognition and processing of DNA lesions. UvrC both incises the 5' and 3' sides of the lesion. The N-terminal half is responsible for the 3' incision and the C-terminal half is responsible for the 5' incision. The protein is UvrABC system protein C of Pseudomonas fluorescens (strain Pf0-1).